The sequence spans 1219 residues: DNA ligase 4 (1219 aa).

Residues E251, K253, R258, R273, E303, F342, E418, K423, R434, K440, and K442 each coordinate ATP. The active-site N6-AMP-lysine intermediate is K253. E303 is a binding site for Mg(2+). Mg(2+) is bound at residue E418. A disordered region spans residues 604–632 (NGTTQKQKESESTQDNPKVNKSSKRGEKK). 2 consecutive BRCT domains span residues 651 to 739 (GKTS…PKYF) and 807 to 909 (VYFY…VYTL). 2 disordered regions span residues 914–1126 (MEES…MDMK) and 1146–1197 (IPSQ…SDVV). Polar residues predominate over residues 932–960 (VASQGSAQTKEPASSKIAITSSRGRSNTR). Residues 1042–1051 (QRSRRGKKAA) show a composition bias toward basic residues. A compositionally biased stretch (acidic residues) spans 1056–1065 (DESDENDELD). 2 stretches are compositionally biased toward basic and acidic residues: residues 1084–1096 (VENE…DIAK) and 1117–1126 (RNAKTEMDMK). Positions 1148-1159 (SQKTTETSNRTT) are enriched in polar residues.

This sequence belongs to the ATP-dependent DNA ligase family. Interacts with XRCC4 via its tandem BRCT domains. Interacts with POLL. It depends on Mg(2+) as a cofactor. As to expression, widely expressed, with higher levels in young flowers and roots.

Its subcellular location is the nucleus. It carries out the reaction ATP + (deoxyribonucleotide)n-3'-hydroxyl + 5'-phospho-(deoxyribonucleotide)m = (deoxyribonucleotide)n+m + AMP + diphosphate.. Its function is as follows. DNA ligase involved in DNA non-homologous end joining (NHEJ); required for double-strand break (DSB) repair. May be involved for T-DNA integration even if not absolutely required. Seems to be dispensable under normal growth conditions. The sequence is that of DNA ligase 4 (LIG4) from Arabidopsis thaliana (Mouse-ear cress).